A 117-amino-acid chain; its full sequence is Large ribosomal subunit protein bL20 (117 aa).

It belongs to the bacterial ribosomal protein bL20 family.

Its function is as follows. Binds directly to 23S ribosomal RNA and is necessary for the in vitro assembly process of the 50S ribosomal subunit. It is not involved in the protein synthesizing functions of that subunit. This chain is Large ribosomal subunit protein bL20, found in Limosilactobacillus reuteri (strain DSM 20016) (Lactobacillus reuteri).